The primary structure comprises 533 residues: Di/tripeptide-binding protein 3 (533 aa).

A signal peptide spans 1 to 24; that stretch reads MRKILPLRAWLAAGLILGSPFSHA.

It belongs to the bacterial solute-binding protein 5 family. The complex is composed of two ATP-binding proteins (DppD and DppF), two transmembrane proteins (DppB and DppC) and a solute-binding protein (DppA3). Five orthologous SBPs (DppA1-A5) are present in P.aeruginosa, which increases the substrate specificity of the DppBCDF transporter.

Part of the ABC transporter DppABCDF involved in the uptake of various di/tripeptides. Prefers dipeptides with acidic residues at the C-terminal end. Involved in the uptake of phaseolotoxin, a toxic tripeptide inhibiting the enzyme ornithine carbamoyltransferase. This Pseudomonas aeruginosa (strain UCBPP-PA14) protein is Di/tripeptide-binding protein 3.